The following is a 1230-amino-acid chain: DNA-directed RNA polymerase, mitochondrial (1230 aa).

Residues M1–S41 constitute a mitochondrion transit peptide. Disordered stretches follow at residues R18–K55, G95–T115, and V731–A750. Residues P732–A744 are compositionally biased toward pro residues. A mediates interaction with TEFM region spans residues F802–S1230. Residues D922, K991, and D1151 contribute to the active site.

Belongs to the phage and mitochondrial RNA polymerase family. As to quaternary structure, homodimer. Component of the mitochondrial transcription initiation complex, composed at least of TFB2M, TFAM and POLRMT. In this complex TFAM recruits POLRMT to the promoter whereas TFB2M induces structural changes in POLRMT to enable promoter opening and trapping of the DNA non-template strand. Upon metabolic stress, forms a complex composed of FOXO3, SIRT3 and mitochondrial RNA polymerase POLRMT; the complex is recruited to mtDNA in a SIRT3-dependent manner. Also forms a complex composed of FOXO3, SIRT3, TFAM and POLRMT. Interacts with TFB1M and TFB2M, leading to the stimulation of transcription. Interacts with TEFM. Interacts with MTRES1.

It is found in the mitochondrion. It carries out the reaction RNA(n) + a ribonucleoside 5'-triphosphate = RNA(n+1) + diphosphate. Functionally, DNA-dependent RNA polymerase catalyzes the transcription of mitochondrial DNA into RNA using the four ribonucleoside triphosphates as substrates. Component of the mitochondrial transcription initiation complex, composed at least of TFB2M, TFAM and POLRMT that is required for basal transcription of mitochondrial DNA. In this complex, TFAM recruits POLRMT to a specific promoter whereas TFB2M induces structural changes in POLRMT to enable promoter opening and trapping of the DNA non-template strand. Has DNA primase activity. Catalyzes the synthesis of short RNA primers that are necessary for the initiation of lagging-strand DNA synthesis from the origin of light-strand DNA replication (OriL). This Homo sapiens (Human) protein is DNA-directed RNA polymerase, mitochondrial.